Reading from the N-terminus, the 236-residue chain is Thiamine-phosphate synthase (236 aa).

4-amino-2-methyl-5-(diphosphooxymethyl)pyrimidine contacts are provided by residues 57–61 (QLRDK) and Asn89. 2 residues coordinate Mg(2+): Asp90 and Asp109. Residue Ser128 participates in 4-amino-2-methyl-5-(diphosphooxymethyl)pyrimidine binding. 154–156 (TPS) contributes to the 2-[(2R,5Z)-2-carboxy-4-methylthiazol-5(2H)-ylidene]ethyl phosphate binding site. Residue Lys157 coordinates 4-amino-2-methyl-5-(diphosphooxymethyl)pyrimidine. 2-[(2R,5Z)-2-carboxy-4-methylthiazol-5(2H)-ylidene]ethyl phosphate contacts are provided by residues Gly185 and 205–206 (IS).

It belongs to the thiamine-phosphate synthase family. Mg(2+) serves as cofactor.

The catalysed reaction is 2-[(2R,5Z)-2-carboxy-4-methylthiazol-5(2H)-ylidene]ethyl phosphate + 4-amino-2-methyl-5-(diphosphooxymethyl)pyrimidine + 2 H(+) = thiamine phosphate + CO2 + diphosphate. The enzyme catalyses 2-(2-carboxy-4-methylthiazol-5-yl)ethyl phosphate + 4-amino-2-methyl-5-(diphosphooxymethyl)pyrimidine + 2 H(+) = thiamine phosphate + CO2 + diphosphate. It carries out the reaction 4-methyl-5-(2-phosphooxyethyl)-thiazole + 4-amino-2-methyl-5-(diphosphooxymethyl)pyrimidine + H(+) = thiamine phosphate + diphosphate. Its pathway is cofactor biosynthesis; thiamine diphosphate biosynthesis; thiamine phosphate from 4-amino-2-methyl-5-diphosphomethylpyrimidine and 4-methyl-5-(2-phosphoethyl)-thiazole: step 1/1. Its function is as follows. Condenses 4-methyl-5-(beta-hydroxyethyl)thiazole monophosphate (THZ-P) and 2-methyl-4-amino-5-hydroxymethyl pyrimidine pyrophosphate (HMP-PP) to form thiamine monophosphate (TMP). The sequence is that of Thiamine-phosphate synthase from Roseiflexus sp. (strain RS-1).